The sequence spans 329 residues: L-lactate dehydrogenase (329 aa).

NAD(+) contacts are provided by residues valine 18, glutamate 39, lysine 46, tyrosine 71, and 85-86 (GA). Positions 88 and 94 each coordinate substrate. NAD(+) contacts are provided by residues serine 107, 124–126 (AAN), and serine 149. 126–129 (NPVD) is a substrate binding site. 154-157 (DSAR) is a binding site for substrate. Beta-D-fructose 1,6-bisphosphate contacts are provided by arginine 159 and histidine 174. Catalysis depends on histidine 181, which acts as the Proton acceptor. Tyrosine 226 carries the phosphotyrosine modification. Residue threonine 235 participates in substrate binding.

Belongs to the LDH/MDH superfamily. LDH family. Homotetramer.

It localises to the cytoplasm. It carries out the reaction (S)-lactate + NAD(+) = pyruvate + NADH + H(+). It functions in the pathway fermentation; pyruvate fermentation to lactate; (S)-lactate from pyruvate: step 1/1. Allosterically activated by fructose 1,6-bisphosphate (FBP). Functionally, catalyzes the conversion of lactate to pyruvate. The protein is L-lactate dehydrogenase of Streptococcus equinus (Streptococcus bovis).